A 332-amino-acid chain; its full sequence is 4-hydroxy-3-methylbut-2-enyl diphosphate reductase (332 aa).

C34 is a binding site for [4Fe-4S] cluster. (2E)-4-hydroxy-3-methylbut-2-enyl diphosphate-binding residues include H63 and H96. H63 and H96 together coordinate dimethylallyl diphosphate. Isopentenyl diphosphate-binding residues include H63 and H96. C118 provides a ligand contact to [4Fe-4S] cluster. H146 is a binding site for (2E)-4-hydroxy-3-methylbut-2-enyl diphosphate. H146 is a dimethylallyl diphosphate binding site. Position 146 (H146) interacts with isopentenyl diphosphate. E148 (proton donor) is an active-site residue. Position 186 (T186) interacts with (2E)-4-hydroxy-3-methylbut-2-enyl diphosphate. [4Fe-4S] cluster is bound at residue C216. The (2E)-4-hydroxy-3-methylbut-2-enyl diphosphate site is built by S244, S245, N246, and S289. Dimethylallyl diphosphate is bound by residues S244, S245, N246, and S289. S244, S245, N246, and S289 together coordinate isopentenyl diphosphate.

This sequence belongs to the IspH family. It depends on [4Fe-4S] cluster as a cofactor.

The catalysed reaction is isopentenyl diphosphate + 2 oxidized [2Fe-2S]-[ferredoxin] + H2O = (2E)-4-hydroxy-3-methylbut-2-enyl diphosphate + 2 reduced [2Fe-2S]-[ferredoxin] + 2 H(+). It catalyses the reaction dimethylallyl diphosphate + 2 oxidized [2Fe-2S]-[ferredoxin] + H2O = (2E)-4-hydroxy-3-methylbut-2-enyl diphosphate + 2 reduced [2Fe-2S]-[ferredoxin] + 2 H(+). Its pathway is isoprenoid biosynthesis; dimethylallyl diphosphate biosynthesis; dimethylallyl diphosphate from (2E)-4-hydroxy-3-methylbutenyl diphosphate: step 1/1. The protein operates within isoprenoid biosynthesis; isopentenyl diphosphate biosynthesis via DXP pathway; isopentenyl diphosphate from 1-deoxy-D-xylulose 5-phosphate: step 6/6. Its function is as follows. Catalyzes the conversion of 1-hydroxy-2-methyl-2-(E)-butenyl 4-diphosphate (HMBPP) into a mixture of isopentenyl diphosphate (IPP) and dimethylallyl diphosphate (DMAPP). Acts in the terminal step of the DOXP/MEP pathway for isoprenoid precursor biosynthesis. The protein is 4-hydroxy-3-methylbut-2-enyl diphosphate reductase of Mycobacterium ulcerans (strain Agy99).